A 459-amino-acid chain; its full sequence is Eukaryotic translation initiation factor 3 subunit M (459 aa).

A PCI domain is found at 207–384 (LDWAQTHVVD…SEFLVHRATY (178 aa)). The disordered stretch occupies residues 431–459 (AAAEGEKGDKNNKGPSERRRAPQEIAAAE). Residues 434 to 452 (EGEKGDKNNKGPSERRRAP) show a composition bias toward basic and acidic residues.

It belongs to the eIF-3 subunit M family. In terms of assembly, component of the eukaryotic translation initiation factor 3 (eIF-3) complex.

The protein resides in the cytoplasm. Component of the eukaryotic translation initiation factor 3 (eIF-3) complex, which is involved in protein synthesis of a specialized repertoire of mRNAs and, together with other initiation factors, stimulates binding of mRNA and methionyl-tRNAi to the 40S ribosome. The eIF-3 complex specifically targets and initiates translation of a subset of mRNAs involved in cell proliferation. The chain is Eukaryotic translation initiation factor 3 subunit M from Emericella nidulans (strain FGSC A4 / ATCC 38163 / CBS 112.46 / NRRL 194 / M139) (Aspergillus nidulans).